We begin with the raw amino-acid sequence, 284 residues long: Diaminopimelate epimerase (284 aa).

Substrate is bound by residues Asn13 and Asn66. Cys75 acts as the Proton donor in catalysis. Residues 76 to 77, Asn166, Asn199, and 217 to 218 each bind substrate; these read GN and ER. The Proton acceptor role is filled by Cys226. 227 to 228 lines the substrate pocket; the sequence is GT.

It belongs to the diaminopimelate epimerase family. Homodimer.

It is found in the cytoplasm. It catalyses the reaction (2S,6S)-2,6-diaminopimelate = meso-2,6-diaminopimelate. Its pathway is amino-acid biosynthesis; L-lysine biosynthesis via DAP pathway; DL-2,6-diaminopimelate from LL-2,6-diaminopimelate: step 1/1. Functionally, catalyzes the stereoinversion of LL-2,6-diaminopimelate (L,L-DAP) to meso-diaminopimelate (meso-DAP), a precursor of L-lysine and an essential component of the bacterial peptidoglycan. In Halothermothrix orenii (strain H 168 / OCM 544 / DSM 9562), this protein is Diaminopimelate epimerase.